The following is a 504-amino-acid chain: ATP synthase subunit alpha (504 aa).

170–177 (GDRQTGKT) is an ATP binding site.

It belongs to the ATPase alpha/beta chains family. As to quaternary structure, F-type ATPases have 2 components, CF(1) - the catalytic core - and CF(0) - the membrane proton channel. CF(1) has five subunits: alpha(3), beta(3), gamma(1), delta(1), epsilon(1). CF(0) has three main subunits: a(1), b(2) and c(9-12). The alpha and beta chains form an alternating ring which encloses part of the gamma chain. CF(1) is attached to CF(0) by a central stalk formed by the gamma and epsilon chains, while a peripheral stalk is formed by the delta and b chains.

It localises to the cell membrane. It catalyses the reaction ATP + H2O + 4 H(+)(in) = ADP + phosphate + 5 H(+)(out). Its function is as follows. Produces ATP from ADP in the presence of a proton gradient across the membrane. The alpha chain is a regulatory subunit. In Shouchella clausii (strain KSM-K16) (Alkalihalobacillus clausii), this protein is ATP synthase subunit alpha.